Consider the following 378-residue polypeptide: C-type lectin domain family 17, member A (378 aa).

Residues 1–119 (MHNLYSITGY…PPLPCKPRNM (119 aa)) form a disordered region. Residues 1 to 172 (MHNLYSITGY…GCCQKRWMVY (172 aa)) are Cytoplasmic-facing. 3 stretches are compositionally biased toward acidic residues: residues 17–27 (MEEEEEDDDYE), 43–53 (MEEEEEDDDYE), and 69–79 (MEEEEEDDDYE). The span at 86–101 (KDLPPKPGSSAPPRPP) shows a compositional bias: pro residues. A helical; Signal-anchor for type II membrane protein transmembrane segment spans residues 173–193 (LCLLVVTSLFLGCLGLTVTLI). At 194–378 (KYQELMEELR…YWICERKCSC (185 aa)) the chain is on the extracellular side. N215 and N237 each carry an N-linked (GlcNAc...) asparagine glycan. 3 disulfides stabilise this stretch: C254–C265, C282–C372, and C350–C364. The C-type lectin domain occupies 261 to 373 (FEGKCYYFSP…CYKTTYWICE (113 aa)). N285 carries N-linked (GlcNAc...) asparagine glycosylation. Residues E341, N343, E348, N360, and D361 each coordinate Ca(2+).

As to quaternary structure, oligomer; disulfide-linked. Post-translationally, phosphorylated on tyrosine residues. As to expression, expressed on dividing B-cells of germinal centers in various tissues, including lymph nodes, tonsils, stomach, intestine, appendix and spleen.

The protein resides in the membrane. In terms of biological role, cell surface receptor which may be involved in carbohydrate-mediated communication between cells in the germinal center. Binds glycans with terminal alpha-linked mannose or fucose residues. The sequence is that of C-type lectin domain family 17, member A (CLEC17A) from Homo sapiens (Human).